A 483-amino-acid polypeptide reads, in one-letter code: 1-aminocyclopropane-1-carboxylate synthase 2 (483 aa).

Residue Lys275 is modified to N6-(pyridoxal phosphate)lysine.

This sequence belongs to the class-I pyridoxal-phosphate-dependent aminotransferase family. It depends on pyridoxal 5'-phosphate as a cofactor.

It carries out the reaction S-adenosyl-L-methionine = 1-aminocyclopropane-1-carboxylate + S-methyl-5'-thioadenosine + H(+). Its pathway is alkene biosynthesis; ethylene biosynthesis via S-adenosyl-L-methionine; ethylene from S-adenosyl-L-methionine: step 1/2. Functionally, catalyzes the formation of 1-aminocyclopropane-1-carboxylate, a direct precursor of ethylene in higher plants. Involved in defense response by producing ethylene after pathogen infection. Involved in several phosphate deficiency-induced adaptive responses, such as lateral root elongation. In Oryza sativa subsp. japonica (Rice), this protein is 1-aminocyclopropane-1-carboxylate synthase 2.